The primary structure comprises 336 residues: Biotin synthase (336 aa).

In terms of domain architecture, Radical SAM core spans 48-277 (VFGDEVEFCS…QAELRLCGGR (230 aa)). Positions 66, 70, and 73 each coordinate [4Fe-4S] cluster. The [2Fe-2S] cluster site is built by cysteine 110, cysteine 142, cysteine 202, and arginine 272.

The protein belongs to the radical SAM superfamily. Biotin synthase family. Homodimer. The cofactor is [4Fe-4S] cluster. It depends on [2Fe-2S] cluster as a cofactor.

It catalyses the reaction (4R,5S)-dethiobiotin + (sulfur carrier)-SH + 2 reduced [2Fe-2S]-[ferredoxin] + 2 S-adenosyl-L-methionine = (sulfur carrier)-H + biotin + 2 5'-deoxyadenosine + 2 L-methionine + 2 oxidized [2Fe-2S]-[ferredoxin]. The protein operates within cofactor biosynthesis; biotin biosynthesis; biotin from 7,8-diaminononanoate: step 2/2. Its function is as follows. Catalyzes the conversion of dethiobiotin (DTB) to biotin by the insertion of a sulfur atom into dethiobiotin via a radical-based mechanism. The sequence is that of Biotin synthase from Persephonella marina (strain DSM 14350 / EX-H1).